A 194-amino-acid polypeptide reads, in one-letter code: MKTLSILDTIIKIPEKIEIHPTTTEYIYTITGPLGSSSINLKKLDKNGIACINFDIQNKQVLIRSLYPKYNGLYKKLIENKFLGVSRGFCVYLEIVGVGYRAALLSSSLQNSTKDTNDTIVLKLGHSHDIHYKVPNGVRVFLQSPSEICIFGVDLNQVTQVAHSIRNTRPPSVYKGKGIRYTNEKIVTKTGKRK.

Belongs to the universal ribosomal protein uL6 family.

It is found in the mitochondrion. The polypeptide is Large ribosomal subunit protein uL6m (RPL6) (Prototheca wickerhamii).